We begin with the raw amino-acid sequence, 638 residues long: Meiosis initiator protein (638 aa).

Disordered regions lie at residues 1-21 (MFGSSRYLGSSEQPRANSLGP), 60-79 (NQRNQNKLLSPNKKQRKNHT), 138-249 (LAGL…KGGQ), 404-433 (PSAYTQEAPQEKDTASKAPKDPPESHSLHR), and 447-537 (GNSK…PCPP). Over residues 7-20 (YLGSSEQPRANSLG) the composition is skewed to polar residues. The segment at 62–75 (RNQNKLLSPNKKQR) is basic motif; degenerate. The 55-residue stretch at 62 to 116 (RNQNKLLSPNKKQRKNHTSKLQELALLLPIALKTGTKKLTKKEILVHVLQYIQYL) folds into the bHLH domain. The helix-loop-helix motif stretch occupies residues 76 to 116 (KNHTSKLQELALLLPIALKTGTKKLTKKEILVHVLQYIQYL). Positions 157 to 167 (TPSSSPSSQKS) are enriched in low complexity. Polar residues predominate over residues 182–191 (TQASESQTRT). The segment covering 412–430 (PQEKDTASKAPKDPPESHS) has biased composition (basic and acidic residues). The span at 453–465 (SSSSSSSSSSSSS) shows a compositional bias: low complexity. The span at 528–537 (KEKKKGPCPP) shows a compositional bias: basic residues. Positions 540–608 (KKKCVNGFIM…QHNRIVKQDG (69 aa)) form a DNA-binding region, HMG box.

As to quaternary structure, interacts with STRA8.

The protein resides in the nucleus. Its function is as follows. Gatekeeper of meiotic initiation in both male and female germ cells. In complex with STRA8, directly activates the transcription of a subset of critical meiotic genes playing a central role in cell-cycle switching from mitosis to meiosis. Temporal expression of MEIOSIN is required for meiotic entry decision. This is Meiosis initiator protein from Homo sapiens (Human).